Consider the following 110-residue polypeptide: Insulin (110 aa).

An N-terminal signal peptide occupies residues 1 to 23 (MALWLQAFTLLVLLVLSSPGAQS). 3 cysteine pairs are disulfide-bonded: C30–C96, C42–C109, and C95–C100. Positions 56–87 (DVDPLLGFLSPKSAQENEADEYPYKDQGDLKV) are cleaved as a propeptide — c peptide.

This sequence belongs to the insulin family. As to quaternary structure, heterodimer of a B chain and an A chain linked by two disulfide bonds.

Its subcellular location is the secreted. Insulin decreases blood glucose concentration. It increases cell permeability to monosaccharides, amino acids and fatty acids. It accelerates glycolysis, the pentose phosphate cycle, and glycogen synthesis in liver. This chain is Insulin (ins), found in Pantodon buchholzi (Freshwater butterflyfish).